Here is a 154-residue protein sequence, read N- to C-terminus: MLRLLLLPLFLFTLSMCMGQTFQYSRGWTNGKRSFNAASPLLANGHLHRASELGLTDLYDLQDWSSDRRLERCLSQLQRSLIARNCVPGSDFNANRVDPDPENSAHPRLSNSNGENVLYSSANIPNRHRQSNELLEELSAAGGASAEPNVFGKH.

The N-terminal stretch at 1–19 is a signal peptide; it reads MLRLLLLPLFLFTLSMCMG. Residue Gln20 is modified to Pyrrolidone carboxylic acid. Residue Asn30 is modified to Asparagine amide. Residues 70 to 154 constitute a propeptide that is removed on maturation; it reads LERCLSQLQR…SAEPNVFGKH (85 aa). Positions 91–119 are disordered; the sequence is DFNANRVDPDPENSAHPRLSNSNGENVLY. The span at 109–119 shows a compositional bias: polar residues; that stretch reads LSNSNGENVLY.

Belongs to the corazonin family. In terms of tissue distribution, from late embryo to larva, expression is consistently detected in three neuronal groups: dorso-lateral neurons (DL), dorso-medial neurons (DM), and neurons in the ventral nerve cord (vCrz). Both the vCrz and DM groups die via programmed cell death during metamorphosis, whereas the DL neurons persist to adulthood. In adults, expression is seen in a cluster of six to eight neurons per lobe in the pars lateralis (DLP), in numerous neuronal cells in the optic lobes, and in a novel group of four abdominal ganglionic neurons present only in males (ms-aCrz). Projections of the ms-aCrz neurons terminate within the ventral nerve cord, implying a role as interneurons. Terminals of the DLP neurons are found in the retrocerebral complex that produces juvenile hormone and adipokinetic hormone, located in the vicinity of terminals emanating from PDF-containing pacemaking neurons.

Its subcellular location is the secreted. Cardioactive peptide. Corazonin is probably involved in the physiological regulation of the heart beat. Clock (Clk) and cycle (cyc) proteins negatively regulate Crz transcription in a cell-specific manner. This chain is Pro-corazonin (Crz), found in Drosophila melanogaster (Fruit fly).